Consider the following 261-residue polypeptide: UPF0246 protein Reut_A1014 (261 aa).

The protein belongs to the UPF0246 family.

The protein is UPF0246 protein Reut_A1014 of Cupriavidus pinatubonensis (strain JMP 134 / LMG 1197) (Cupriavidus necator (strain JMP 134)).